Here is a 159-residue protein sequence, read N- to C-terminus: Ubiquitin-conjugating enzyme E2 variant 1B (159 aa).

A UBC core domain is found at 11–159 (PRNFRLLEEL…KGLVVKCCVM (149 aa)).

The protein belongs to the ubiquitin-conjugating enzyme family. In terms of assembly, heterodimer with UBC35 or UBC36. In terms of tissue distribution, expressed in roots, shoots, leaves, stems and flowers, but not in pollen.

In terms of biological role, has no ubiquitin ligase activity on its own. The heterodimer with UBC catalyzes the synthesis of non-canonical poly-ubiquitin chains that are linked through 'Lys-63'. This type of poly-ubiquitination does not lead to protein degradation by the proteasome. Mediates transcriptional activation of target genes. May play a role in the control of progress through the cell cycle and differentiation. May play a role in the error-free DNA repair pathway and contributes to the survival of cells after DNA damage. This is Ubiquitin-conjugating enzyme E2 variant 1B (UEV1B) from Arabidopsis thaliana (Mouse-ear cress).